Consider the following 201-residue polypeptide: Beta-lactamase inhibitory protein (201 aa).

The first 36 residues, 1–36, serve as a signal peptide directing secretion; sequence MRTVGIGAGVRRLGRAVVMAAAVGGLVLGSAGASNA. 2 consecutive repeat copies span residues 37–112 and 116–201. 2 disulfide bridges follow: C66-C78 and C145-C167.

As to quaternary structure, interacts with E.coli beta-lactamase TEM-1; interaction inhibits hydrolysis of beta-lactam antibiotics. Interacts with K.pneumoniae beta-lactamase SHV-1. Interacts with K.pneumoniae beta-lactamases KPC-2 and KPC-3; interaction inhibits hydrolysis of beta-lactam antibiotics. Interacts with E.coli beta-lactamases CTX-M-14 and CTX-M-15; interaction inhibits hydrolysis of beta-lactam antibiotics.

The protein localises to the secreted. Inhibits a wide variety of beta lactamases. This chain is Beta-lactamase inhibitory protein, found in Streptomyces clavuligerus.